We begin with the raw amino-acid sequence, 429 residues long: Adenylosuccinate synthetase (429 aa).

GTP contacts are provided by residues 12–18 (GDEGKGK) and 40–42 (GHT). Catalysis depends on D13, which acts as the Proton acceptor. The Mg(2+) site is built by D13 and G40. Residues 13 to 16 (DEGK), 38 to 41 (NAGH), T128, R142, Q223, T238, and R302 each bind IMP. Catalysis depends on H41, which acts as the Proton donor. Substrate is bound at residue 298–304 (VNTGRPR). Residues R304, 330-332 (KLD), and 412-414 (GVG) contribute to the GTP site.

This sequence belongs to the adenylosuccinate synthetase family. Homodimer. The cofactor is Mg(2+).

It is found in the cytoplasm. It carries out the reaction IMP + L-aspartate + GTP = N(6)-(1,2-dicarboxyethyl)-AMP + GDP + phosphate + 2 H(+). It functions in the pathway purine metabolism; AMP biosynthesis via de novo pathway; AMP from IMP: step 1/2. Its function is as follows. Plays an important role in the de novo pathway of purine nucleotide biosynthesis. Catalyzes the first committed step in the biosynthesis of AMP from IMP. In Renibacterium salmoninarum (strain ATCC 33209 / DSM 20767 / JCM 11484 / NBRC 15589 / NCIMB 2235), this protein is Adenylosuccinate synthetase.